The primary structure comprises 300 residues: Putative hydrolase ML2424 (300 aa).

Aspartate 56 serves as the catalytic Nucleophile. 3 residues coordinate Mg(2+): aspartate 56, aspartate 58, and aspartate 231. Catalysis depends on aspartate 58, which acts as the Proton donor.

It belongs to the HAD-like hydrolase superfamily. SerB family. Mg(2+) serves as cofactor.

The protein is Putative hydrolase ML2424 of Mycobacterium leprae (strain TN).